A 523-amino-acid chain; its full sequence is Endoglucanase 19 (523 aa).

The N-terminal stretch at 1–52 (MCSWSLSSHTLTSPVRQAAMEPKSSSCGGAGIRLRLLVVLHLLLLVPSSAMA) is a signal peptide. Asp-107 serves as the catalytic Nucleophile. The N-linked (GlcNAc...) asparagine glycan is linked to Asn-279. Residues His-442, Asp-493, and Glu-502 contribute to the active site.

Belongs to the glycosyl hydrolase 9 (cellulase E) family.

It localises to the secreted. The enzyme catalyses Endohydrolysis of (1-&gt;4)-beta-D-glucosidic linkages in cellulose, lichenin and cereal beta-D-glucans.. This Oryza sativa subsp. japonica (Rice) protein is Endoglucanase 19.